Consider the following 60-residue polypeptide: UPF0337 protein SSP1134 (60 aa).

The tract at residues 1–41 (MADENKFEQAKGNVKETVGNVTDNKELENEGKEDKTSGKAK) is disordered. Residues 23–41 (DNKELENEGKEDKTSGKAK) are compositionally biased toward basic and acidic residues.

This sequence belongs to the UPF0337 (CsbD) family.

This chain is UPF0337 protein SSP1134, found in Staphylococcus saprophyticus subsp. saprophyticus (strain ATCC 15305 / DSM 20229 / NCIMB 8711 / NCTC 7292 / S-41).